The primary structure comprises 183 residues: dTTP/UTP pyrophosphatase (183 aa).

D64 (proton acceptor) is an active-site residue.

This sequence belongs to the Maf family. YhdE subfamily. Requires a divalent metal cation as cofactor.

It localises to the cytoplasm. The catalysed reaction is dTTP + H2O = dTMP + diphosphate + H(+). It carries out the reaction UTP + H2O = UMP + diphosphate + H(+). Functionally, nucleoside triphosphate pyrophosphatase that hydrolyzes dTTP and UTP. May have a dual role in cell division arrest and in preventing the incorporation of modified nucleotides into cellular nucleic acids. This chain is dTTP/UTP pyrophosphatase, found in Acinetobacter baylyi (strain ATCC 33305 / BD413 / ADP1).